We begin with the raw amino-acid sequence, 340 residues long: uncharacterized protein (340 aa).

An N-terminal signal peptide occupies residues 1–23; that stretch reads MQKKVLSLVLVLAVLESIVPVSA.

This is an uncharacterized protein from Archaeoglobus fulgidus (strain ATCC 49558 / DSM 4304 / JCM 9628 / NBRC 100126 / VC-16).